A 1129-amino-acid chain; its full sequence is A-kinase anchor protein 11 (1129 aa).

The span at 1 to 12 (MQKMQCHLRRPL) shows a compositional bias: basic residues. Positions 1-21 (MQKMQCHLRRPLHSSSSFSSQ) are disordered. Phosphothreonine occurs at positions 251 and 363. Disordered stretches follow at residues 354-376 (IRDRNVIPDTPPSTPLVPSQTSS), 394-416 (EFAPATPPSTPHNSSVGSLSENE), and 434-455 (SEEVESSEGEEHPEMDVKSEHS). Positions 404–416 (PHNSSVGSLSENE) are enriched in polar residues. A phosphoserine mark is found at Ser434, Ser439, and Ser440. Positions 442 to 455 (GEEHPEMDVKSEHS) are enriched in basic and acidic residues. The residue at position 595 (Ser595) is a Phosphoserine. Thr742 bears the Phosphothreonine mark. At Ser835 the chain carries Phosphoserine. The segment at 905-918 (LAEKIVAEAIEKAE) is PKA-RII binding region. Positions 962 to 1061 (SKEVEDFQST…QEDGAEGLQP (100 aa)) are disordered. The span at 968-995 (FQSTESLGSQQMNLSVGEDSTGSWSNLS) shows a compositional bias: polar residues. Over residues 1002 to 1011 (DESSSFHHLS) the composition is skewed to basic and acidic residues. The segment covering 1012–1028 (ESSNGNSSSWSSLGLEG) has biased composition (low complexity). Residues 1033–1042 (NNLSFPTSDS) are compositionally biased toward polar residues. A compositionally biased stretch (acidic residues) spans 1043–1056 (DGPDDRESEQEDGA).

As to expression, expressed in brain and testis.

It localises to the peroxisome. Functionally, binds to type II regulatory subunits of protein kinase A and anchors/targets them. This chain is A-kinase anchor protein 11 (Akap11), found in Rattus norvegicus (Rat).